The sequence spans 199 residues: MIQISDKAQTYFRKLIEREGVPGMGVRLSAVDAGTPRADARLEFAEPADLSGDEWAIDCDGFTLYVVAASVPWMDGAEIDYVTQSTGNQQLTIKAPKIKGEAPAESASMVERVRWVVENEINPQLASHGGRVAVQEVSADGVVLLRFGGGCHGCGMADVTLKQGIEKTLMGRVPGVIAVRDATDHATGDAPYIPRDSAA.

C151 and C154 together coordinate [4Fe-4S] cluster.

This sequence belongs to the NfuA family. In terms of assembly, homodimer. [4Fe-4S] cluster is required as a cofactor.

Functionally, involved in iron-sulfur cluster biogenesis. Binds a 4Fe-4S cluster, can transfer this cluster to apoproteins, and thereby intervenes in the maturation of Fe/S proteins. Could also act as a scaffold/chaperone for damaged Fe/S proteins. In Xanthomonas oryzae pv. oryzae (strain MAFF 311018), this protein is Fe/S biogenesis protein NfuA.